A 734-amino-acid chain; its full sequence is Photosystem I P700 chlorophyll a apoprotein A2 (734 aa).

A run of 8 helical transmembrane segments spans residues 46 to 69 (IFAS…FHVA), 135 to 158 (LYTG…LHLQ), 175 to 199 (LNHH…HVAI), 273 to 291 (IAHH…GHMY), 330 to 353 (IHFQ…QHMY), 369 to 395 (AALY…IFFI), 417 to 439 (AIKS…LYVH), and 517 to 535 (FLVH…LILV). [4Fe-4S] cluster-binding residues include Cys-559 and Cys-568. The next 2 helical transmembrane spans lie at 575 to 596 (AFYL…YWHW) and 643 to 665 (LSVW…MFLI). Chlorophyll a-binding residues include His-654, Met-662, and Tyr-670. Trp-671 lines the phylloquinone pocket. Residues 707–727 (LVGLAHFSVGYIFTYAAFLIA) traverse the membrane as a helical segment.

The protein belongs to the PsaA/PsaB family. The PsaA/B heterodimer binds the P700 chlorophyll special pair and subsequent electron acceptors. PSI consists of a core antenna complex that captures photons, and an electron transfer chain that converts photonic excitation into a charge separation. The eukaryotic PSI reaction center is composed of at least 11 subunits. It depends on P700 is a chlorophyll a/chlorophyll a' dimer, A0 is one or more chlorophyll a, A1 is one or both phylloquinones and FX is a shared 4Fe-4S iron-sulfur center. as a cofactor.

Its subcellular location is the plastid. The protein resides in the chloroplast thylakoid membrane. It carries out the reaction reduced [plastocyanin] + hnu + oxidized [2Fe-2S]-[ferredoxin] = oxidized [plastocyanin] + reduced [2Fe-2S]-[ferredoxin]. PsaA and PsaB bind P700, the primary electron donor of photosystem I (PSI), as well as the electron acceptors A0, A1 and FX. PSI is a plastocyanin-ferredoxin oxidoreductase, converting photonic excitation into a charge separation, which transfers an electron from the donor P700 chlorophyll pair to the spectroscopically characterized acceptors A0, A1, FX, FA and FB in turn. Oxidized P700 is reduced on the lumenal side of the thylakoid membrane by plastocyanin. This is Photosystem I P700 chlorophyll a apoprotein A2 from Amborella trichopoda.